A 221-amino-acid chain; its full sequence is Orotate phosphoribosyltransferase (221 aa).

Lys-27 is a binding site for 5-phospho-alpha-D-ribose 1-diphosphate. An orotate-binding site is contributed by 35-36 (FF). 5-phospho-alpha-D-ribose 1-diphosphate is bound by residues 75–76 (YK), Arg-102, Lys-103, Lys-106, His-108, and 128–136 (DDVLTAGTA). Orotate is bound by residues Thr-132 and Arg-160.

Belongs to the purine/pyrimidine phosphoribosyltransferase family. PyrE subfamily. In terms of assembly, homodimer. Mg(2+) is required as a cofactor.

It catalyses the reaction orotidine 5'-phosphate + diphosphate = orotate + 5-phospho-alpha-D-ribose 1-diphosphate. The protein operates within pyrimidine metabolism; UMP biosynthesis via de novo pathway; UMP from orotate: step 1/2. Catalyzes the transfer of a ribosyl phosphate group from 5-phosphoribose 1-diphosphate to orotate, leading to the formation of orotidine monophosphate (OMP). This Dichelobacter nodosus (strain VCS1703A) protein is Orotate phosphoribosyltransferase.